The following is a 372-amino-acid chain: Envelope phospholipase OPG057 (372 aa).

Residues 153–156 carry the YPPL motif; the sequence is YPPL. Residues cysteine 185 and cysteine 186 are each lipidated (S-palmitoyl cysteine; by host). Positions 307 to 334 constitute a PLD phosphodiesterase domain; that stretch reads FTIQNNTKLLIVDDEYVHITSANFDGTH.

It belongs to the orthopoxvirus OPG057 family. As to quaternary structure, interacts with protein OPG190. Palmitoylated. Attachment of the palmitate moiety is essential for correct intracellular targeting and protein function.

It localises to the virion membrane. The protein resides in the host Golgi apparatus. Its subcellular location is the host trans-Golgi network. The protein localises to the host endoplasmic reticulum membrane. The enzyme catalyses a 1,2-diacyl-sn-glycero-3-phosphocholine + H2O = a 1,2-diacyl-sn-glycero-3-phosphate + choline + H(+). Major envelope protein that plays a role in the biogenesis of the viral double membrane and in egress of virus from the host cell. Produces the wrapped form of virus that is required for cell-to-cell spread. Acts as a lipase with broad specificity including phospholipase C, phospholipase A, and triacylglycerol lipase activities. This Variola virus (isolate Human/India/Ind3/1967) (VARV) protein is Envelope phospholipase OPG057 (OPG057).